We begin with the raw amino-acid sequence, 683 residues long: Long-chain-fatty-acid--CoA ligase 5 (683 aa).

The helical; Signal-anchor for type III membrane protein transmembrane segment at 12–32 (LPTPALICLLTFGTAIFLWLI) threads the bilayer. Over 33–683 (NRPQPVLPLI…IKSLYESIEE (651 aa)) the chain is Cytoplasmic. N6-acetyllysine is present on lysine 361.

It belongs to the ATP-dependent AMP-binding enzyme family. As to expression, expressed most abundantly in the small intestine, and to a much lesser extent in the lung, liver, adrenal gland, adipose tissue and kidney.

Its subcellular location is the mitochondrion. The protein localises to the endoplasmic reticulum. The protein resides in the mitochondrion outer membrane. It is found in the endoplasmic reticulum membrane. It localises to the cell membrane. It catalyses the reaction a long-chain fatty acid + ATP + CoA = a long-chain fatty acyl-CoA + AMP + diphosphate. The catalysed reaction is (5Z,8Z,11Z,14Z)-eicosatetraenoate + ATP + CoA = (5Z,8Z,11Z,14Z)-eicosatetraenoyl-CoA + AMP + diphosphate. It carries out the reaction 15-hydroxy-(5Z,8Z,11Z,13E)-eicosatetraenoate + ATP + CoA = 15-hydroxy-(5Z,8Z,11Z,13E)-eicosatetraenoyl-CoA + AMP + diphosphate. The enzyme catalyses 12-hydroxy-(5Z,8Z,10E,14Z)-eicosatetraenoate + ATP + CoA = 12-hydroxy-(5Z,8Z,10E,14Z)-eicosatetraenoyl-CoA + AMP + diphosphate. It catalyses the reaction 5-hydroxy-(6E,8Z,11Z,14Z)-eicosatetraenoate + ATP + CoA = 5-hydroxy-(6E,8Z,11Z,14Z)-eicosatetraenoyl-CoA + AMP + diphosphate. The catalysed reaction is 14,15-epoxy-(5Z,8Z,11Z)-eicosatrienoate + ATP + CoA = 14,15-epoxy-(5Z,8Z,11Z)-eicosatrienoyl-CoA + AMP + diphosphate. It carries out the reaction 11,12-epoxy-(5Z,8Z,14Z)-eicosatrienoate + ATP + CoA = 11,12-epoxy-(5Z,8Z,14Z)-eicosatrienoyl-CoA + AMP + diphosphate. The enzyme catalyses hexadecanoate + ATP + CoA = hexadecanoyl-CoA + AMP + diphosphate. It catalyses the reaction (E)-hexadec-2-enoate + ATP + CoA = (2E)-hexadecenoyl-CoA + AMP + diphosphate. The catalysed reaction is (9Z)-octadecenoate + ATP + CoA = (9Z)-octadecenoyl-CoA + AMP + diphosphate. Its function is as follows. Catalyzes the conversion of long-chain fatty acids to their active form acyl-CoAs for both synthesis of cellular lipids, and degradation via beta-oxidation. ACSL5 may sensitize epithelial cells to apoptosis specifically triggered by the death ligand TRAIL at the villus tip of the crypt-villus axis of the small intestine. May have a role in the survival of glioma cells. May activate fatty acids from exogenous sources for the synthesis of triacylglycerol destined for intracellular storage. It was suggested that it may also stimulate fatty acid oxidation. Utilizes a wide range of saturated fatty acids with a preference for C16-C18 unsaturated fatty acids. This is Long-chain-fatty-acid--CoA ligase 5 from Rattus norvegicus (Rat).